The chain runs to 102 residues: MIELNEQIIFLGDGTEGDLEYKLYEYMIWLAKAEGIDFVVSNPYGENTVVIGGTAYEVEWRYVGLKSEEYDVTDEGKWIPIGPWFWEHGEPDFEVSSWWCEK.

This is an uncharacterized protein from Escherichia coli (Bacteriophage T4).